The primary structure comprises 123 residues: Large ribosomal subunit protein uL14 (123 aa).

The protein belongs to the universal ribosomal protein uL14 family. Part of the 50S ribosomal subunit. Forms a cluster with proteins L3 and L19. In the 70S ribosome, L14 and L19 interact and together make contacts with the 16S rRNA in bridges B5 and B8.

In terms of biological role, binds to 23S rRNA. Forms part of two intersubunit bridges in the 70S ribosome. The protein is Large ribosomal subunit protein uL14 of Wigglesworthia glossinidia brevipalpis.